The chain runs to 194 residues: Large ribosomal subunit protein bL25 (194 aa).

It belongs to the bacterial ribosomal protein bL25 family. CTC subfamily. Part of the 50S ribosomal subunit; part of the 5S rRNA/L5/L18/L25 subcomplex. Contacts the 5S rRNA. Binds to the 5S rRNA independently of L5 and L18.

Functionally, this is one of the proteins that binds to the 5S RNA in the ribosome where it forms part of the central protuberance. The chain is Large ribosomal subunit protein bL25 from Parabacteroides distasonis (strain ATCC 8503 / DSM 20701 / CIP 104284 / JCM 5825 / NCTC 11152).